The chain runs to 171 residues: 3-hydroxydecanoyl-[acyl-carrier-protein] dehydratase (171 aa).

The active site involves histidine 70.

The protein belongs to the thioester dehydratase family. FabA subfamily. In terms of assembly, homodimer.

It is found in the cytoplasm. The enzyme catalyses a (3R)-hydroxyacyl-[ACP] = a (2E)-enoyl-[ACP] + H2O. The catalysed reaction is (3R)-hydroxydecanoyl-[ACP] = (2E)-decenoyl-[ACP] + H2O. It catalyses the reaction (2E)-decenoyl-[ACP] = (3Z)-decenoyl-[ACP]. It functions in the pathway lipid metabolism; fatty acid biosynthesis. Functionally, necessary for the introduction of cis unsaturation into fatty acids. Catalyzes the dehydration of (3R)-3-hydroxydecanoyl-ACP to E-(2)-decenoyl-ACP and then its isomerization to Z-(3)-decenoyl-ACP. Can catalyze the dehydratase reaction for beta-hydroxyacyl-ACPs with saturated chain lengths up to 16:0, being most active on intermediate chain length. The polypeptide is 3-hydroxydecanoyl-[acyl-carrier-protein] dehydratase (Colwellia psychrerythraea (strain 34H / ATCC BAA-681) (Vibrio psychroerythus)).